We begin with the raw amino-acid sequence, 413 residues long: Serine/threonine transporter SstT (413 aa).

9 helical membrane passes run 15-35 (NIVIQILIGIIAGVALATLAP), 48-68 (FVSALKAVAPILVFILVAASI), 82-102 (VIVLYLVGTFCASLTAVVMSF), 141-161 (ALMTGNFIGILGWAVALGLGL), 178-198 (CISAIVTVVIRFAPIGIFGLV), 216-236 (LLAVLLGSMAFIALIVNPLIV), 290-310 (IPLGATINMAGAAITITVLTL), 330-350 (LVAAVSACGASGVAGGSLLLI), and 357-377 (FGISNDIAMQVVAIGFIIGVV).

This sequence belongs to the dicarboxylate/amino acid:cation symporter (DAACS) (TC 2.A.23) family.

Its subcellular location is the cell inner membrane. It carries out the reaction L-serine(in) + Na(+)(in) = L-serine(out) + Na(+)(out). The catalysed reaction is L-threonine(in) + Na(+)(in) = L-threonine(out) + Na(+)(out). Its function is as follows. Involved in the import of serine and threonine into the cell, with the concomitant import of sodium (symport system). The chain is Serine/threonine transporter SstT from Aliivibrio fischeri (strain ATCC 700601 / ES114) (Vibrio fischeri).